The chain runs to 1309 residues: Target of rapamycin complex 2 subunit ste20 (1309 aa).

The 87-residue stretch at Asp-24–Glu-110 folds into the REM-1 domain. Residues Gln-105–Arg-128 form a disordered region. The segment covering Thr-113–Arg-128 has biased composition (polar residues). Ser-151 is modified (phosphoserine). The tract at residues Asn-183 to Leu-205 is disordered. Polar residues predominate over residues Asp-194–Leu-205. The next 6 membrane-spanning stretches (helical) occupy residues Leu-285 to Ser-305, Leu-392 to Leu-412, Val-504 to Leu-524, Thr-564 to Ile-584, Leu-926 to Cys-946, and Leu-984 to Ile-1004. A Phosphothreonine modification is found at Thr-1203.

Belongs to the RICTOR family. The target of rapamycin complex 2 (TORC2) is composed of at least bit61, pop3/wat1, sin1, ste20 and tor1. In terms of processing, either Ser-203 or Ser-204 are phosphorylated as well.

The protein resides in the membrane. Its function is as follows. Component of TORC2, which regulates multiple cellular processes to control cell growth in response to environmental signals. TORC2 is required for cell survival under various stress conditions. TORC2 positively controls G1 cell-cycle arrest, sexual development and amino acid uptake. Positively regulates amino acid uptake through the control of expression of amino acid permeases. The chain is Target of rapamycin complex 2 subunit ste20 from Schizosaccharomyces pombe (strain 972 / ATCC 24843) (Fission yeast).